Here is a 71-residue protein sequence, read N- to C-terminus: Bowman-Birk type trypsin inhibitor (71 aa).

Cystine bridges form between Cys-10–Cys-67, Cys-11–Cys-27, Cys-14–Cys-63, Cys-17–Cys-25, Cys-35–Cys-42, and Cys-39–Cys-55.

The protein belongs to the Bowman-Birk serine protease inhibitor family.

Inhibits trypsin but not chymotrypsin. In Triticum aestivum (Wheat), this protein is Bowman-Birk type trypsin inhibitor.